The chain runs to 206 residues: MARYLGPKLKLSRREGTDLFLKSGVRAIDTKCKIEQAPGQHGARKPRLSDYGVQLREKQKVRRIYGVLERQFRNYYKEAARLKGNTGENLLALLEGRLDNVVYRMGFGATRAEARQLVSHKAIMVNGRVVNIASYQVSPNDVVSIREKAKKQSRVKAALELAEQREKPTWLEVDAGKMEGTFKRKPERSDLSADINEHLIVELYSK.

The S4 RNA-binding domain occupies 96–156 (GRLDNVVYRM…EKAKKQSRVK (61 aa)).

The protein belongs to the universal ribosomal protein uS4 family. Part of the 30S ribosomal subunit. Contacts protein S5. The interaction surface between S4 and S5 is involved in control of translational fidelity.

In terms of biological role, one of the primary rRNA binding proteins, it binds directly to 16S rRNA where it nucleates assembly of the body of the 30S subunit. With S5 and S12 plays an important role in translational accuracy. In Escherichia fergusonii (strain ATCC 35469 / DSM 13698 / CCUG 18766 / IAM 14443 / JCM 21226 / LMG 7866 / NBRC 102419 / NCTC 12128 / CDC 0568-73), this protein is Small ribosomal subunit protein uS4.